Reading from the N-terminus, the 467-residue chain is Retinoic acid receptor RXR-alpha (467 aa).

A disordered region spans residues 1-112; sequence MDTKHFLPLD…MNPVSSTEDI (112 aa). Residues 1 to 139 form a modulating domain region; that stretch reads MDTKHFLPLD…GNMASFTKHI (139 aa). Lys4 participates in a covalent cross-link: Glycyl lysine isopeptide (Lys-Gly) (interchain with G-Cter in SUMO2). The segment covering 11–25 has biased composition (polar residues); sequence FSTQVNSSSLNSPTG. Ser22 and Ser28 each carry phosphoserine. Positions 32 to 52 are enriched in low complexity; it reads PSLHPSLGPGIGSPLGSPGQL. A compositionally biased stretch (polar residues) spans 54-63; that stretch reads SPISTLSSPI. 2 positions are modified to phosphoserine; by MAPK8 and MAPK9: Ser61 and Ser75. A compositionally biased stretch (polar residues) spans 83–109; that stretch reads SVPTTPTLGFGTGSPQLNSPMNPVSST. Phosphothreonine; by MAPK8 and MAPK9 is present on Thr87. Lys113 is covalently cross-linked (Glycyl lysine isopeptide (Lys-Gly) (interchain with G-Cter in SUMO)). Ser134 is subject to Phosphoserine. Positions 140 and 143 each coordinate Zn(2+). The NR C4-type zinc finger occupies 140-160; sequence CAICGDRSSGKHYGVYSCEGC. A DNA-binding region (nuclear receptor) is located at residues 140-205; the sequence is CAICGDRSSG…RYQKCLAMGM (66 aa). Residue Lys150 is modified to N6-acetyllysine. The Zn(2+) site is built by Cys157 and Cys160. The tract at residues 165–170 is nuclear localization signal; it reads KRTVRK. Cys176, Cys182, Cys192, and Cys195 together coordinate Zn(2+). The segment at 176–200 adopts an NR C4-type zinc-finger fold; the sequence is CRDNKDCLIDKRQRNRCQYCRYQKC. The tract at residues 206–229 is hinge; that stretch reads KREAVQEERQRGKDRNENEVESTS. Positions 211-223 are enriched in basic and acidic residues; sequence QEERQRGKDRNEN. The tract at residues 211–233 is disordered; that stretch reads QEERQRGKDRNENEVESTSSANE. The NR LBD domain occupies 232–463; that stretch reads NEDMPVEKIL…TFLMEMLEAP (232 aa). Ser264 is subject to Phosphoserine. Position 265 is a phosphoserine; by MAPK8 and MAPK9 (Ser265). 9-cis-retinoate contacts are provided by Arg321 and Ala332. Residues Arg321 and Ala332 each contribute to the all-trans-retinoate site. The interval 353–373 is required for nuclear export; sequence RVLTELVSKMRDMQMDKTELG.

It belongs to the nuclear hormone receptor family. NR2 subfamily. Homodimer. Heterodimer with RARA; required for ligand-dependent retinoic acid receptor transcriptional activity. Heterodimer with PPARA (via the leucine-like zipper in the LBD); the interaction is required for PPARA transcriptional activity. Heterodimerizes with PPARG. Heterodimerizes (via NR LBD) with RARB. Heterodimerizes with NR1H4; the heterodimerization enhances the binding affinity for LXXLL motifs from coactivators. Interacts with coactivator NCO6. Interacts with coactivator NCO3. Interacts with coactivator FAM120B. Interacts with coactivator PELP1, SENP6, SFPQ, DNTTIP2 and RNF8. Interacts with PRMT2. Interacts with ASXL1. Interacts with BHLHE40/DEC1, BHLHE41/DEC2, NCOR1 and NCOR2. Interacts in a ligand-dependent fashion with MED1 and NCOA1. Interacts with VDR. Interacts with EP300; the interaction is decreased by 9-cis retinoic acid. Heterodimer (via C-terminus) with NR4A1 (via DNA-binding domain); the interaction is enhanced by 9-cis retinoic acid. NR4A1 competes with EP300 for interaction with RXRA and thereby attenuates EP300 mediated acetylation of RXRA. In the absence of hormonal ligand, interacts with TACC1. Interacts ith IGFBP3. Post-translationally, acetylated by EP300; acetylation enhances DNA binding and transcriptional activity. Phosphorylated on serine and threonine residues mainly in the N-terminal modulating domain. Constitutively phosphorylated on Ser-22 in the presence or absence of ligand. Under stress conditions, hyperphosphorylated by activated JNK on Ser-61, Ser-75, Thr-87 and Ser-265. Phosphorylated on Ser-28, in vitro, by PKA. This phosphorylation is required for repression of cAMP-mediated transcriptional activity of RARA. In terms of processing, ubiquitinated by UBR5, leading to its degradation: UBR5 specifically recognizes and binds ligand-bound RXRA when it is not associated with coactivators (NCOAs). In presence of NCOAs, the UBR5-degron is not accessible, preventing its ubiquitination and degradation. Post-translationally, sumoylation negatively regulates transcriptional activity. Desumoylated specifically by SENP6. Expressed in macrophages (at protein level).

The protein localises to the nucleus. The protein resides in the cytoplasm. Its subcellular location is the mitochondrion. Its function is as follows. Receptor for retinoic acid that acts as a transcription factor. Forms homo- or heterodimers with retinoic acid receptors (RARs) and binds to target response elements in response to their ligands, all-trans or 9-cis retinoic acid, to regulate gene expression in various biological processes. The RAR/RXR heterodimers bind to the retinoic acid response elements (RARE) composed of tandem 5'-AGGTCA-3' sites known as DR1-DR5 to regulate transcription. The high affinity ligand for retinoid X receptors (RXRs) is 9-cis retinoic acid. In the absence of ligand, the RXR-RAR heterodimers associate with a multiprotein complex containing transcription corepressors that induce histone deacetylation, chromatin condensation and transcriptional suppression. On ligand binding, the corepressors dissociate from the receptors and coactivators are recruited leading to transcriptional activation. Serves as a common heterodimeric partner for a number of nuclear receptors, such as RARA, RARB and PPARA. The RXRA/RARB heterodimer can act as a transcriptional repressor or transcriptional activator, depending on the RARE DNA element context. The RXRA/PPARA heterodimer is required for PPARA transcriptional activity on fatty acid oxidation genes such as ACOX1 and the P450 system genes. Together with RARA, positively regulates microRNA-10a expression, thereby inhibiting the GATA6/VCAM1 signaling response to pulsatile shear stress in vascular endothelial cells. Acts as an enhancer of RARA binding to RARE DNA element. May facilitate the nuclear import of heterodimerization partners such as VDR and NR4A1. Promotes myelin debris phagocytosis and remyelination by macrophages. Plays a role in the attenuation of the innate immune system in response to viral infections, possibly by negatively regulating the transcription of antiviral genes such as type I IFN genes. Involved in the regulation of calcium signaling by repressing ITPR2 gene expression, thereby controlling cellular senescence. This Mus musculus (Mouse) protein is Retinoic acid receptor RXR-alpha (Rxra).